A 247-amino-acid chain; its full sequence is Spermatogenesis-associated protein 46 (247 aa).

The tract at residues 125–164 (QRDSCLPEDTADSVCSSSPSPENTCPREATKKSRPGPDTT) is disordered. Positions 137 to 147 (SVCSSSPSPEN) are enriched in polar residues.

It is found in the nucleus membrane. Plays a role in spermiogenesis and fertilization. The chain is Spermatogenesis-associated protein 46 (SPATA46) from Bos taurus (Bovine).